Here is a 181-residue protein sequence, read N- to C-terminus: Cyclic AMP-dependent transcription factor ATF-3 (181 aa).

A disordered region spans residues 76–97; sequence VTKAEVAPEEDERKKRRRERNK. A Glycyl lysine isopeptide (Lys-Gly) (interchain with G-Cter in SUMO2) cross-link involves residue Lys-78. The bZIP domain occupies 86 to 149; the sequence is DERKKRRRER…QHLIYMLNLH (64 aa). Positions 88–110 are basic motif; the sequence is RKKRRRERNKIAAAKCRNKKKEK. The interval 114–142 is leucine-zipper; it reads LQKESEKLESVNAELKAQIEELKNEKQHL. Thr-162 bears the Phosphothreonine mark. Lys-175 participates in a covalent cross-link: Glycyl lysine isopeptide (Lys-Gly) (interchain with G-Cter in SUMO2).

This sequence belongs to the bZIP family. ATF subfamily. As to quaternary structure, binds DNA as a homodimer or a heterodimer. Interacts with KAT5; promoting KAT5 autoacetylation and KAT5 deubiquitination by USP7.

It is found in the nucleus. This protein binds the cAMP response element (CRE) (consensus: 5'-GTGACGT[AC][AG]-3'), a sequence present in many viral and cellular promoters. Represses transcription from promoters with ATF sites. It may repress transcription by stabilizing the binding of inhibitory cofactors at the promoter. The protein is Cyclic AMP-dependent transcription factor ATF-3 (ATF3) of Bos taurus (Bovine).